The following is a 609-amino-acid chain: MADPIVHPGVHRPEFSAPLHARAEIIATLRAALGKPNTTLVGAAIGTGMAAQAASRGGADFILALNAGRLRSMGAPSIFSLLALRKSNDFVLDFAQSEILPFVKVPVFFGASAFDPRCSIEAELERIADAGFGAIVNFPTSIFLDGRFRADIEGAGLGFQRELEMLRAAQKRNMATLAYVRTVAEAQQAATAGVDIINLNLGWNVGGTVGSRTELSLRQAAEYAKIIFRQIRAISEDTLCVLEGGPIVSPDQMYEVSALSKADGYIGGSTIDRVPLEASMEQITSAFKSVGTLQKRIDELERQLEHVQREYSIVGRSPSIQQIKQRIEKLAASSLPVMITGQAGTGKKLLARGIHEAARRSGSKLISSEDASGESLFGFAPSEGGRKVLGLLQYHPKATLLIESVECLCVDAQERLIEVIETGAYRRLGDNERGRFEGRLILASTRPLPELGSSGQLIPALESRLAPGHVFLPPLCDRLEDLPLLAEHFLQALRKDRRSRKLSVDHSAYRVLMTYGWPENIRELRSVLETAAIRCEGDWIKSEHLPPLGDANADAPHPHPGEEREWILDALQRHRFRRGEAARYLGISRKTLYNKMRVYGLPLQPRERS.

Positions 313 to 533 (IVGRSPSIQQ…LRSVLETAAI (221 aa)) constitute a Sigma-54 factor interaction domain. 395 to 404 (HPKATLLIES) is an ATP binding site. The segment at residues 578 to 597 (RGEAARYLGISRKTLYNKMR) is a DNA-binding region (H-T-H motif).

Its function is as follows. Probable transcriptional regulator that acts in conjunction with sigma-54. This is Putative transcriptional regulatory protein y4pA from Sinorhizobium fredii (strain NBRC 101917 / NGR234).